A 715-amino-acid polypeptide reads, in one-letter code: MTAKTKPAPDIATLTKPKAKVELMRLRLEIEGHDKAYYQDDAPKISDADYDALRRRLEAIEQKFPELVNASSPTQTVGAAPARGFAKVQHAVPMLSLGNAFADDEVAEFVERVQRFLRLDDVPAIVAEPKIDGLSLSLRYENGELVRAATRGDGFTGEDVTANVRTIKDVPNTLKGKHIPAACELRGEVYMLKQDFLALNKRQEEAGETVFANPRNSAAGSLRQKDVLVTASRPLKFFAYAWGEMSTYPMDEPTQHKMLQWLDHAGFVVNPEITLCHSVEDALAFYRRIGEKRASLPYDIDGVVYKVDRLDYQERLGFVSRSPRWAIAHKFAAEQATTVLEKIDIQVGRTGALTPVARLQPVTVGGVVVQNATLHNEDYIRGIGNDGEPIRDGVDIREGDTVVVQRAGDVIPQIVSVVMQKRPAGAEPYHFPHKCPVCGSHAVREEGEAVWRCTGALICPAQAVERLKHFVSRLAFDIDGLGEKQIELFHERGWVQEPADIFTLKARNDQLKLEQLEGYGETSVRNLFAAIDARRTIELHRLIFALGIRHVGEGNAKLLARHYGTLDAFLSAMRAAADAQTEEGNTSEAYQDLDNIAGIGDVVAEAVVEFFAEERNIKALDALLAELTEVLPAEQARRDTAVAGKTVVFTGSLSKFTRDEAKAAAERLGAKVAGSVSKKTDYVVAGEDAGSKLTKAKDLGVTVLTEDEWLALIGN.

NAD(+) is bound by residues 47–51 (DADYD), 96–97 (SL), and Glu128. The N6-AMP-lysine intermediate role is filled by Lys130. NAD(+) is bound by residues Arg151, Glu188, Lys306, and Lys330. The Zn(2+) site is built by Cys435, Cys438, Cys453, and Cys459. A BRCT domain is found at 637–715 (RRDTAVAGKT…EDEWLALIGN (79 aa)).

This sequence belongs to the NAD-dependent DNA ligase family. LigA subfamily. Mg(2+) is required as a cofactor. It depends on Mn(2+) as a cofactor.

The enzyme catalyses NAD(+) + (deoxyribonucleotide)n-3'-hydroxyl + 5'-phospho-(deoxyribonucleotide)m = (deoxyribonucleotide)n+m + AMP + beta-nicotinamide D-nucleotide.. In terms of biological role, DNA ligase that catalyzes the formation of phosphodiester linkages between 5'-phosphoryl and 3'-hydroxyl groups in double-stranded DNA using NAD as a coenzyme and as the energy source for the reaction. It is essential for DNA replication and repair of damaged DNA. In Rhodopseudomonas palustris (strain TIE-1), this protein is DNA ligase.